Consider the following 118-residue polypeptide: Large ribosomal subunit protein bL20 (118 aa).

The protein belongs to the bacterial ribosomal protein bL20 family.

Functionally, binds directly to 23S ribosomal RNA and is necessary for the in vitro assembly process of the 50S ribosomal subunit. It is not involved in the protein synthesizing functions of that subunit. The polypeptide is Large ribosomal subunit protein bL20 (Aeromonas hydrophila subsp. hydrophila (strain ATCC 7966 / DSM 30187 / BCRC 13018 / CCUG 14551 / JCM 1027 / KCTC 2358 / NCIMB 9240 / NCTC 8049)).